The primary structure comprises 286 residues: MQGWKTIVGKLMSRYDFPLPDLSVQAEDKILGGVPTRIYTPPDVADPPLALYFHAGGWVMGSIDEEDGFVRTLCKLARTRIFSVGYRLAPEFRFPMALDDCLTVARSVLETYPVQSICFIGASAGGNMAFSTALTLVSDGLGDRVQGVVALAPVTVHPDSVSADNRDRGEYTSYEENDRLTINTGSAMRSFFDCYGAPPDDPRLSCLLHPGLGKLNKVYMAVGDADTLRDDVRLMRDALVALEVPVKCDEYPGYPHFSWLFPSPALREHQALFFGNLLSGICWVCE.

Positions 54-56 match the Involved in the stabilization of the negatively charged intermediate by the formation of the oxyanion hole motif; it reads HAG. Residues serine 123, aspartate 226, and histidine 256 contribute to the active site.

This sequence belongs to the 'GDXG' lipolytic enzyme family.

The catalysed reaction is (2S,3S)-versiconal hemiacetal acetate + H2O = (2S-3S)-versiconal hemiacetal + acetate + H(+). It catalyses the reaction (3S)-versiconol acetate + H2O = (S)-versiconol + acetate + H(+). The protein operates within mycotoxin biosynthesis; sterigmatocystin biosynthesis. Its function is as follows. Esterase; part of the gene cluster that mediates the biosynthesis of sterigmatocystin (ST), a polyketide-derived furanocoumarin which is part of the most toxic and carcinogenic compounds among the known mycotoxins. The first step in the biosynthesis of sterigmatocystin is the production of hexanoate by the fatty acid synthase (FAS) units stcJ and stcK. The polyketide backbone is assembled by the non-reducing polyketide synthase stcA by condensation of the starter hexanoyl-CoA and 7 malonyl-CoA extender units followed by cyclization and release of norsolorinic acid. Norsolorinic acid is the first stable intermediate in the biosynthesis of sterigmatocystin and is converted into averantin (AVN) by the ketoreductase stcE which reduces the hexanoate ketone to an alcohol. Averantin is then oxidized into 5'-hydroxyaverantin (HAVN) by the cytochrome P450 monooxygenase stcF. 5'-hydroxyaverantin is further converted to 5'-oxyaverantin (OAVN) by the 5'-hydroxyaverantin dehydrogenase stcG. The next step is the conversion of OAVN into averufin (AVF) which is catalyzed by a yet to be identified enzyme. The cytochrome P450 monooxygenase stcB and the flavin-binding monooxygenase stcW are both required for the conversion of averufin to 1-hydroxyversicolorone. The esterase stcI probably catalyzes the formation of versiconal hemiacetal acetate from 1-hydroxyversicolorone. The oxydoreductase stcN then probably catalyzes the biosynthetic step from versiconal to versicolorin B (VERB). The next step is performed by the versicolorin B desaturase stcL to produce versicolorin A (VERA). The ketoreductase stcU and the cytochrome P450 monooxygenase stcS are involved in the conversion of versicolorin A to demethylsterigmatocystin. The Baeyer-Villiger oxidas stcQ and the reductase stcR might be involved in the biosynthetic step from versicolorin A to demethylsterigmatocystin. The final step in the biosynthesis of sterigmatocystin is the methylation of demethylsterigmatocystin catalyzed by the methyltransferase stcP. The polypeptide is Versiconal hemiacetal acetate esterase stcI (Emericella nidulans (strain FGSC A4 / ATCC 38163 / CBS 112.46 / NRRL 194 / M139) (Aspergillus nidulans)).